A 102-amino-acid chain; its full sequence is Large ribosomal subunit protein bL21 (102 aa).

The protein belongs to the bacterial ribosomal protein bL21 family. In terms of assembly, part of the 50S ribosomal subunit. Contacts protein L20.

Its function is as follows. This protein binds to 23S rRNA in the presence of protein L20. In Bacillus subtilis (strain 168), this protein is Large ribosomal subunit protein bL21.